Here is a 226-residue protein sequence, read N- to C-terminus: Leucyl/phenylalanyl-tRNA--protein transferase (226 aa).

This sequence belongs to the L/F-transferase family.

The protein resides in the cytoplasm. It carries out the reaction N-terminal L-lysyl-[protein] + L-leucyl-tRNA(Leu) = N-terminal L-leucyl-L-lysyl-[protein] + tRNA(Leu) + H(+). The enzyme catalyses N-terminal L-arginyl-[protein] + L-leucyl-tRNA(Leu) = N-terminal L-leucyl-L-arginyl-[protein] + tRNA(Leu) + H(+). It catalyses the reaction L-phenylalanyl-tRNA(Phe) + an N-terminal L-alpha-aminoacyl-[protein] = an N-terminal L-phenylalanyl-L-alpha-aminoacyl-[protein] + tRNA(Phe). In terms of biological role, functions in the N-end rule pathway of protein degradation where it conjugates Leu, Phe and, less efficiently, Met from aminoacyl-tRNAs to the N-termini of proteins containing an N-terminal arginine or lysine. The polypeptide is Leucyl/phenylalanyl-tRNA--protein transferase (Pseudomonas putida (strain ATCC 47054 / DSM 6125 / CFBP 8728 / NCIMB 11950 / KT2440)).